The primary structure comprises 235 residues: Aspartate/glutamate leucyltransferase (235 aa).

This sequence belongs to the R-transferase family. Bpt subfamily.

The protein resides in the cytoplasm. It carries out the reaction N-terminal L-glutamyl-[protein] + L-leucyl-tRNA(Leu) = N-terminal L-leucyl-L-glutamyl-[protein] + tRNA(Leu) + H(+). The enzyme catalyses N-terminal L-aspartyl-[protein] + L-leucyl-tRNA(Leu) = N-terminal L-leucyl-L-aspartyl-[protein] + tRNA(Leu) + H(+). Functionally, functions in the N-end rule pathway of protein degradation where it conjugates Leu from its aminoacyl-tRNA to the N-termini of proteins containing an N-terminal aspartate or glutamate. This Pseudomonas entomophila (strain L48) protein is Aspartate/glutamate leucyltransferase.